The following is a 253-amino-acid chain: Triosephosphate isomerase, cytosolic (253 aa).

Asn-10 and Lys-12 together coordinate substrate. His-96 acts as the Electrophile in catalysis. Catalysis depends on Glu-166, which acts as the Proton acceptor.

This sequence belongs to the triosephosphate isomerase family. Homodimer.

The protein resides in the cytoplasm. The enzyme catalyses D-glyceraldehyde 3-phosphate = dihydroxyacetone phosphate. The protein operates within carbohydrate biosynthesis; gluconeogenesis. Its pathway is carbohydrate degradation; glycolysis; D-glyceraldehyde 3-phosphate from glycerone phosphate: step 1/1. The sequence is that of Triosephosphate isomerase, cytosolic from Zea mays (Maize).